Here is a 160-residue protein sequence, read N- to C-terminus: Small ribosomal subunit protein uS7 (160 aa).

This sequence belongs to the universal ribosomal protein uS7 family. In terms of assembly, part of the 30S ribosomal subunit. Contacts proteins S9 and S11.

Functionally, one of the primary rRNA binding proteins, it binds directly to 16S rRNA where it nucleates assembly of the head domain of the 30S subunit. Is located at the subunit interface close to the decoding center, probably blocks exit of the E-site tRNA. The sequence is that of Small ribosomal subunit protein uS7 from Rickettsia prowazekii (strain Madrid E).